The following is a 401-amino-acid chain: Probable 2,3-bisphosphoglycerate-independent phosphoglycerate mutase (401 aa).

This sequence belongs to the BPG-independent phosphoglycerate mutase family. A-PGAM subfamily.

The enzyme catalyses (2R)-2-phosphoglycerate = (2R)-3-phosphoglycerate. Its pathway is carbohydrate degradation; glycolysis; pyruvate from D-glyceraldehyde 3-phosphate: step 3/5. In terms of biological role, catalyzes the interconversion of 2-phosphoglycerate and 3-phosphoglycerate. In Thermotoga petrophila (strain ATCC BAA-488 / DSM 13995 / JCM 10881 / RKU-1), this protein is Probable 2,3-bisphosphoglycerate-independent phosphoglycerate mutase.